We begin with the raw amino-acid sequence, 329 residues long: MTSSNGDNKGLVVSFGEMLIDFVPTESGVSLSESSGFLKAPGGAPANVAIAVSRLGGRAAFVGKLGDDEFGHMLAGILRKNDVDDQGINFDKGARTALAFVTLRSDGEREFMFYRNPSADMLLRPDELNLELIRSAKVFHYGSISLITEPCRSAHMKAMEVAKEAGALLSYDPNLREPLWPSPEEARKQIMSIWDKADIIKVSDVELEFLTGNKTIDDETAMSLWHPNLKLLLVTLGENGCRYYTKDFHGSVETFHVDAVDTTGAGDSFVGALLNQIVDDQSVLEEEERLRKVLRFANACGAITTTKKGAIPALPTDCEALSFLKIQVE.

The protein belongs to the carbohydrate kinase PfkB family.

It carries out the reaction D-fructose + ATP = D-fructose 6-phosphate + ADP + H(+). It participates in glycan biosynthesis; starch biosynthesis. In terms of biological role, may play an important role in maintaining the flux of carbon towards starch formation. The protein is Probable fructokinase-2 of Arabidopsis thaliana (Mouse-ear cress).